We begin with the raw amino-acid sequence, 404 residues long: uncharacterized protein (404 aa).

Residues 1–22 show a composition bias toward polar residues; that stretch reads MASSINNSSQPTVPSISNNSHG. Residues 1–110 form a disordered region; sequence MASSINNSSQ…QQTPVKRRRR (110 aa). Threonine 47 is modified (phosphothreonine). The span at 87–104 shows a compositional bias: polar residues; sequence SRGSSLKSHLETESQQTP. A PHD-type zinc finger spans residues 117-166; the sequence is VDYCSACGGRGLFICCEGCPCSFHLSCLEPPLTPENIPEGSWFCVTCSIK.

This is an uncharacterized protein from Schizosaccharomyces pombe (strain 972 / ATCC 24843) (Fission yeast).